The following is a 138-amino-acid chain: Histone H2B.3 (138 aa).

2 stretches are compositionally biased toward basic and acidic residues: residues 1-18 and 26-38; these read MAPK…EKTT and EKRP…GGDK. Residues 1–46 are disordered; sequence MAPKAEKKPVAEKAEKTTAAKKTKAEKRPPASKEGGDKKGKKKSKK. N6-acetyllysine occurs at positions 7 and 27. A Glycyl lysine isopeptide (Lys-Gly) (interchain with G-Cter in ubiquitin) cross-link involves residue K134.

This sequence belongs to the histone H2B family. In terms of assembly, the nucleosome is a histone octamer containing two molecules each of H2A, H2B, H3 and H4 assembled in one H3-H4 heterotetramer and two H2A-H2B heterodimers. The octamer wraps approximately 147 bp of DNA. In terms of processing, can be acetylated to form H2BK6ac and H2BK33ac. Post-translationally, monoubiquitinated to form H2BK143ub1; may give a specific tag for epigenetic transcriptional activation.

Its subcellular location is the nucleus. It is found in the chromosome. Its function is as follows. Core component of nucleosome. Nucleosomes wrap and compact DNA into chromatin, limiting DNA accessibility to the cellular machineries which require DNA as a template. Histones thereby play a central role in transcription regulation, DNA repair, DNA replication and chromosomal stability. DNA accessibility is regulated via a complex set of post-translational modifications of histones, also called histone code, and nucleosome remodeling. The chain is Histone H2B.3 from Triticum aestivum (Wheat).